The sequence spans 182 residues: MQTEHVILLNAQGVPTGTLEKYAAHTADTRLHLAFSSWLFNAKGQLLVTRRALSKKAWPGVWTNSVCGHPQLGESNEDAVIRRCRYELGVEITPPESIYPDFRYRATDPNGIVENEVCPVFAARTTSALQINDDEVMDYQWCDLADVLRGIDATPWAFSPWMVMQATNREARIRLSAFTQLK.

Positions 25 and 32 each coordinate Mn(2+). The Nudix hydrolase domain maps to 30–164 (RLHLAFSSWL…PWAFSPWMVM (135 aa)). C67 is an active-site residue. Position 67 (C67) interacts with Mg(2+). Position 69 (H69) interacts with Mn(2+). Residue E87 participates in Mg(2+) binding. Residues E114 and E116 each coordinate Mn(2+). E116 is an active-site residue.

The protein belongs to the IPP isomerase type 1 family. As to quaternary structure, homodimer. Mg(2+) serves as cofactor. Mn(2+) is required as a cofactor.

Its subcellular location is the cytoplasm. The enzyme catalyses isopentenyl diphosphate = dimethylallyl diphosphate. It functions in the pathway isoprenoid biosynthesis; dimethylallyl diphosphate biosynthesis; dimethylallyl diphosphate from isopentenyl diphosphate: step 1/1. Functionally, catalyzes the 1,3-allylic rearrangement of the homoallylic substrate isopentenyl (IPP) to its highly electrophilic allylic isomer, dimethylallyl diphosphate (DMAPP). This Shigella dysenteriae serotype 1 (strain Sd197) protein is Isopentenyl-diphosphate Delta-isomerase.